We begin with the raw amino-acid sequence, 107 residues long: Sulmotoxin 1 (107 aa).

The first 19 residues, 1–19 (MKTLLLALAVVVLVCLGSA), serve as a signal peptide directing secretion. The propeptide occupies 20-34 (NELGLGRQRVDRRRR). 5 disulfides stabilise this stretch: cysteine 44–cysteine 68, cysteine 47–cysteine 55, cysteine 61–cysteine 83, cysteine 87–cysteine 98, and cysteine 99–cysteine 104.

This sequence belongs to the three-finger toxin family. Ancestral subfamily. Boigatoxin sub-subfamily. As to quaternary structure, monomer. In terms of tissue distribution, expressed by the venom gland.

It is found in the secreted. In terms of biological role, mammal-specific neurotoxin (tested on mice). Not toxic to lizards (tested on geckos). This is Sulmotoxin 1 from Spilotes sulphureus (Amazon puffing snake).